A 141-amino-acid chain; its full sequence is Large ribosomal subunit protein uL11 (141 aa).

The protein belongs to the universal ribosomal protein uL11 family. As to quaternary structure, part of the ribosomal stalk of the 50S ribosomal subunit. Interacts with L10 and the large rRNA to form the base of the stalk. L10 forms an elongated spine to which L12 dimers bind in a sequential fashion forming a multimeric L10(L12)X complex. Post-translationally, one or more lysine residues are methylated.

Forms part of the ribosomal stalk which helps the ribosome interact with GTP-bound translation factors. This Synechococcus sp. (strain JA-3-3Ab) (Cyanobacteria bacterium Yellowstone A-Prime) protein is Large ribosomal subunit protein uL11.